The following is a 601-amino-acid chain: AT-rich interactive domain-containing protein 3A (601 aa).

The segment at 1-224 is disordered; that stretch reads MKLQAVMETL…HMASQMPPPD (224 aa). The segment covering 60-89 has biased composition (low complexity); it reads MAALAAMRAAAAGLGHPSSPGGSEDGPPIS. Phosphoserine is present on residues serine 78, serine 82, and serine 89. Threonine 99 is modified (phosphothreonine). Residue serine 102 is modified to Phosphoserine. The span at 114 to 123 shows a compositional bias: basic and acidic residues; the sequence is GHAEGDRHLM. The residue at position 127 (serine 127) is a Phosphoserine. Residues 128–165 form an acidic region; it reads DDDDTKSKWEEQELEELGEEEEEEEEEDDFEEEEEEEE. Positions 139–166 are enriched in acidic residues; that stretch reads QELEELGEEEEEEEEEDDFEEEEEEEEG. An ARID domain is found at 243–335; it reads DPKRKEFLDD…YLYPYECERR (93 aa). 2 positions are modified to phosphoserine: serine 358 and serine 367. Glycyl lysine isopeptide (Lys-Gly) (interchain with G-Cter in SUMO2) cross-links involve residues lysine 403, lysine 404, lysine 457, and lysine 467. The REKLES domain maps to 449–546; the sequence is AALEQLREKL…GVLFAQPPPP (98 aa). An important for nuclear localization region spans residues 450 to 493; the sequence is ALEQLREKLESTEPPEKKMALVADEQQRLMQRAVQQSFLAMTAQ. A homodimerization region spans residues 495 to 518; that stretch reads PMNIRINSQASESRQDSAVSLTSA. Residues 542–562 form an important for cytoplasmic localization region; that stretch reads QPPPPTAPSAPGKGGVSSIGT. Residues 545–601 are disordered; it reads PPTAPSAPGKGGVSSIGTNTTTGSRTGASGSTVSGGQVGLPGVSTPTMSSTSNNSLP. Low complexity-rich tracts occupy residues 559–579 and 588–601; these read SIGTNTTTGSRTGASGSTVSG and STPTMSSTSNNSLP.

In terms of assembly, homodimer. Heterodimer with ARID3B. Interacts with E2F1. Interacts with GTF2I and BTK. B-cell specific in the adult. Expressed in B-cell progenitors, down-regulated in the immature B-cell stage, and is up-regulated again at later stages of B-lymphocyte differentiation.

The protein resides in the nucleus. The protein localises to the cytoplasm. Its function is as follows. Transcription factor involved in B-cell differentiation. Binds a VH promoter proximal site necessary for induced mu-heavy-chain transcription. Binds the minor groove of a restricted ATC sequence that is sufficient for nuclear matrix association. This sequence motif is present in matrix-associating regions (MARS) proximal to the promoter and flanking E mu. Activates E mu-driven transcription by binding these sites. May be involved in the control of cell cycle progression by the RB1/E2F1 pathway. This Mus musculus (Mouse) protein is AT-rich interactive domain-containing protein 3A (Arid3a).